We begin with the raw amino-acid sequence, 297 residues long: Phosphoribosylaminoimidazole-succinocarboxamide synthase (297 aa).

This sequence belongs to the SAICAR synthetase family.

The enzyme catalyses 5-amino-1-(5-phospho-D-ribosyl)imidazole-4-carboxylate + L-aspartate + ATP = (2S)-2-[5-amino-1-(5-phospho-beta-D-ribosyl)imidazole-4-carboxamido]succinate + ADP + phosphate + 2 H(+). Its pathway is purine metabolism; IMP biosynthesis via de novo pathway; 5-amino-1-(5-phospho-D-ribosyl)imidazole-4-carboxamide from 5-amino-1-(5-phospho-D-ribosyl)imidazole-4-carboxylate: step 1/2. The sequence is that of Phosphoribosylaminoimidazole-succinocarboxamide synthase from Methylococcus capsulatus (strain ATCC 33009 / NCIMB 11132 / Bath).